The sequence spans 497 residues: MGGFVLAIDQGTTSSRAIVFDGAMRIVGTGQKEFPQIFPQSGWVEHDPDAIWDSVVSSIHDALARARITAGDLAAIGITNQRETVVVWDKDTGKPIHNAIVWQDRRTSAFCETLKRDGLEATVTTKTGLLLDPYFSGTKLSWLLDHVEGARARAEQGGLCFGTVDTYLIWRLTGGKSFVTDATNASRTLIFNIAEHGWDEELLALLNIPAAMLPEVKDCAADFGVTDKAVFGAAVPILGVAGDQQAATIGQACFAPGMVKSTYGTGCFALLNTGADRVVSKSRLLTTIAYRMDGKTTYALEGSIFIAGAAVQWLRDGLKVIGDAAETGRLAAEADPGQPVYLVPAFTGLGAPWWDPDARGALFGLTRNTGPAELARAALEAVCYQTRDLLDAMHKDWQNGEDDMVLRVDGGMAASDWTMQRLADLLDAPVDRPSVIETTALGAAFLAASRVGLWPGMDAFARAWARDHRFEPVMDAETRTEKLRGWRDAVRRTLTAG.

Threonine 12 contributes to the ADP binding site. ATP contacts are provided by threonine 12, threonine 13, and serine 14. Threonine 12 is a binding site for sn-glycerol 3-phosphate. Arginine 16 is an ADP binding site. Sn-glycerol 3-phosphate is bound by residues arginine 82, glutamate 83, tyrosine 134, and aspartate 243. Residues arginine 82, glutamate 83, tyrosine 134, aspartate 243, and glutamine 244 each coordinate glycerol. Threonine 265 and glycine 308 together coordinate ADP. ATP-binding residues include threonine 265, glycine 308, glutamine 312, and glycine 411. An ADP-binding site is contributed by glycine 411.

Belongs to the FGGY kinase family.

It catalyses the reaction glycerol + ATP = sn-glycerol 3-phosphate + ADP + H(+). Its pathway is polyol metabolism; glycerol degradation via glycerol kinase pathway; sn-glycerol 3-phosphate from glycerol: step 1/1. Its activity is regulated as follows. Inhibited by fructose 1,6-bisphosphate (FBP). Its function is as follows. Key enzyme in the regulation of glycerol uptake and metabolism. Catalyzes the phosphorylation of glycerol to yield sn-glycerol 3-phosphate. This is Glycerol kinase from Allorhizobium ampelinum (strain ATCC BAA-846 / DSM 112012 / S4) (Agrobacterium vitis (strain S4)).